The following is an 84-amino-acid chain: Delta-thalatoxin-Tas1a (84 aa).

A signal peptide spans 1-19 (MAYLKIVLVALMLVLAVSA). The propeptide occupies 20–33 (MRRPDQQDQDISVA). 3 disulfide bridges follow: Cys38–Cys78, Cys40–Cys68, and Cys61–Cys79.

The protein belongs to the sea anemone sodium channel inhibitory toxin family. Type II subfamily.

The protein resides in the secreted. It is found in the nematocyst. Functionally, binds specifically to the voltage-gated sodium channel (Nav) and delays its inactivation. The protein is Delta-thalatoxin-Tas1a of Thalassianthus aster (Fuzzy-tipped anemone).